Here is a 252-residue protein sequence, read N- to C-terminus: Large ribosomal subunit protein uL29m (252 aa).

At Lys146 the chain carries N6-acetyllysine.

It belongs to the universal ribosomal protein uL29 family. Component of the mitochondrial ribosome large subunit (39S) which comprises a 16S rRNA and about 50 distinct proteins.

It localises to the mitochondrion. The protein is Large ribosomal subunit protein uL29m (MRPL47) of Bos taurus (Bovine).